The primary structure comprises 1242 residues: Phosphorylase b kinase regulatory subunit alpha, skeletal muscle isoform (1242 aa).

9 positions are modified to phosphoserine: S630, S731, S737, S740, S760, S813, S974, S983, and S987. Positions L812–L842 are calmodulin-binding. At S1009 the chain carries Phosphoserine; by autocatalysis. S1020 is modified (phosphoserine; by PKA). A phosphoserine mark is found at S1022 and S1025. The interval S1065–S1105 is calmodulin-binding. Residue S1132 is modified to Phosphoserine. The S-farnesyl cysteine moiety is linked to residue C1239.

It belongs to the phosphorylase b kinase regulatory chain family. In terms of assembly, hexadecamer of 4 heterotetramers, each composed of alpha, beta, gamma, and delta subunits. Alpha (PHKA1 or PHKA2) and beta (PHKB) are regulatory subunits, gamma (PHKG1 or PHKG2) is the catalytic subunit, and delta is calmodulin. In terms of processing, although the final Cys may be farnesylated, the terminal tripeptide is probably not removed, and the C-terminus is not methylated.

The protein resides in the cell membrane. It functions in the pathway glycan biosynthesis; glycogen metabolism. Its activity is regulated as follows. By phosphorylation of various serine residues and by calcium. In terms of biological role, phosphorylase b kinase catalyzes the phosphorylation of serine in certain substrates, including troponin I. The alpha chain may bind calmodulin. The protein is Phosphorylase b kinase regulatory subunit alpha, skeletal muscle isoform (Phka1) of Rattus norvegicus (Rat).